Here is a 341-residue protein sequence, read N- to C-terminus: tRNA N6-adenosine threonylcarbamoyltransferase (341 aa).

Fe cation is bound by residues histidine 111 and histidine 115. Substrate contacts are provided by residues 134 to 138 (LVSGG), aspartate 167, glycine 180, and asparagine 276. A Fe cation-binding site is contributed by aspartate 304.

Belongs to the KAE1 / TsaD family. Fe(2+) serves as cofactor.

It localises to the cytoplasm. It carries out the reaction L-threonylcarbamoyladenylate + adenosine(37) in tRNA = N(6)-L-threonylcarbamoyladenosine(37) in tRNA + AMP + H(+). Its function is as follows. Required for the formation of a threonylcarbamoyl group on adenosine at position 37 (t(6)A37) in tRNAs that read codons beginning with adenine. Is involved in the transfer of the threonylcarbamoyl moiety of threonylcarbamoyl-AMP (TC-AMP) to the N6 group of A37, together with TsaE and TsaB. TsaD likely plays a direct catalytic role in this reaction. The chain is tRNA N6-adenosine threonylcarbamoyltransferase from Alteromonas mediterranea (strain DSM 17117 / CIP 110805 / LMG 28347 / Deep ecotype).